The following is a 253-amino-acid chain: uncharacterized protein (253 aa).

This is an uncharacterized protein from Haemophilus influenzae (strain ATCC 51907 / DSM 11121 / KW20 / Rd).